We begin with the raw amino-acid sequence, 449 residues long: Serine/threonine-protein phosphatase 2A activator 2 (449 aa).

Disordered stretches follow at residues 1-72 (MDSS…DPST) and 378-416 (MSEQ…PTGW). The span at 54-69 (NPTPVPETPALPPRPD) shows a compositional bias: pro residues. Residues 389–403 (EENEEEGGEVEVYDD) are compositionally biased toward acidic residues.

The protein belongs to the PTPA-type PPIase family.

The protein resides in the cytoplasm. The catalysed reaction is [protein]-peptidylproline (omega=180) = [protein]-peptidylproline (omega=0). In terms of biological role, PPIases accelerate the folding of proteins. It catalyzes the cis-trans isomerization of proline imidic peptide bonds in oligopeptides. Acts as a regulatory subunit for PP2A-like phosphatases modulating their activity or substrate specificity, probably by inducing a conformational change in the catalytic subunit, a direct target of the PPIase. Can reactivate inactive phosphatase PP2A-phosphatase methylesterase complexes (PP2Ai) in presence of ATP and Mg(2+) by dissociating the inactive form from the complex. This chain is Serine/threonine-protein phosphatase 2A activator 2 (rrd-2), found in Neurospora crassa (strain ATCC 24698 / 74-OR23-1A / CBS 708.71 / DSM 1257 / FGSC 987).